The chain runs to 252 residues: Ribosomal RNA large subunit methyltransferase E (252 aa).

Gly48, Trp50, Asp68, Asp84, and Asp107 together coordinate S-adenosyl-L-methionine. The active-site Proton acceptor is the Lys147. One can recognise a TRAM domain in the interval Pro194–Glu252.

This sequence belongs to the class I-like SAM-binding methyltransferase superfamily. RNA methyltransferase RlmE family.

It is found in the cytoplasm. The catalysed reaction is uridine(2552) in 23S rRNA + S-adenosyl-L-methionine = 2'-O-methyluridine(2552) in 23S rRNA + S-adenosyl-L-homocysteine + H(+). In terms of biological role, specifically methylates the uridine in position 2552 of 23S rRNA at the 2'-O position of the ribose in the fully assembled 50S ribosomal subunit. The polypeptide is Ribosomal RNA large subunit methyltransferase E (Natronomonas pharaonis (strain ATCC 35678 / DSM 2160 / CIP 103997 / JCM 8858 / NBRC 14720 / NCIMB 2260 / Gabara) (Halobacterium pharaonis)).